A 751-amino-acid polypeptide reads, in one-letter code: 1,3-beta-galactosyl-N-acetylhexosamine phosphorylase (751 aa).

D313 functions as the Proton donor in the catalytic mechanism.

It belongs to the glycoside hydrolase 112 family. In terms of assembly, homodimer.

The catalysed reaction is beta-D-galactosyl-(1-&gt;3)-N-acetyl-D-glucosamine + phosphate = alpha-D-galactose 1-phosphate + N-acetyl-D-glucosamine. In terms of biological role, reversibly phosphorolyzes lacto-N-biose to Gal1-P and N-acetylglucosamine (GlcNAc) and galacto-N-biose to Gal1-P and N-acetylgalactosamine (GalNAc). Involved in the lacto-N-biose I/galacto-N-biose (LNB/GNB) degradation pathway, which is important for host intestinal colonization by bifidobacteria. This is 1,3-beta-galactosyl-N-acetylhexosamine phosphorylase (lnpA) from Bifidobacterium longum subsp. longum (strain ATCC 15707 / DSM 20219 / JCM 1217 / NCTC 11818 / E194b).